Here is a 441-residue protein sequence, read N- to C-terminus: 4-hydroxy-3-methylbut-2-en-1-yl diphosphate synthase (flavodoxin) (441 aa).

C320, C323, C366, and E373 together coordinate [4Fe-4S] cluster.

Belongs to the IspG family. It depends on [4Fe-4S] cluster as a cofactor.

The catalysed reaction is (2E)-4-hydroxy-3-methylbut-2-enyl diphosphate + oxidized [flavodoxin] + H2O + 2 H(+) = 2-C-methyl-D-erythritol 2,4-cyclic diphosphate + reduced [flavodoxin]. Its pathway is isoprenoid biosynthesis; isopentenyl diphosphate biosynthesis via DXP pathway; isopentenyl diphosphate from 1-deoxy-D-xylulose 5-phosphate: step 5/6. Its function is as follows. Converts 2C-methyl-D-erythritol 2,4-cyclodiphosphate (ME-2,4cPP) into 1-hydroxy-2-methyl-2-(E)-butenyl 4-diphosphate. This Rhodopseudomonas palustris (strain ATCC BAA-98 / CGA009) protein is 4-hydroxy-3-methylbut-2-en-1-yl diphosphate synthase (flavodoxin).